The sequence spans 278 residues: Imidazole glycerol phosphate synthase subunit HisF (278 aa).

Residues Asp11 and Asp130 contribute to the active site.

The protein belongs to the HisA/HisF family. Heterodimer of HisH and HisF.

It localises to the cytoplasm. It catalyses the reaction 5-[(5-phospho-1-deoxy-D-ribulos-1-ylimino)methylamino]-1-(5-phospho-beta-D-ribosyl)imidazole-4-carboxamide + L-glutamine = D-erythro-1-(imidazol-4-yl)glycerol 3-phosphate + 5-amino-1-(5-phospho-beta-D-ribosyl)imidazole-4-carboxamide + L-glutamate + H(+). It participates in amino-acid biosynthesis; L-histidine biosynthesis; L-histidine from 5-phospho-alpha-D-ribose 1-diphosphate: step 5/9. IGPS catalyzes the conversion of PRFAR and glutamine to IGP, AICAR and glutamate. The HisF subunit catalyzes the cyclization activity that produces IGP and AICAR from PRFAR using the ammonia provided by the HisH subunit. This is Imidazole glycerol phosphate synthase subunit HisF from Thermodesulfovibrio yellowstonii (strain ATCC 51303 / DSM 11347 / YP87).